The primary structure comprises 542 residues: CTP synthase (542 aa).

An amidoligase domain region spans residues 1–265 (MTRYVFITGG…DREVLGHFGL (265 aa)). Ser13 lines the CTP pocket. A UTP-binding site is contributed by Ser13. Residues 14 to 19 (SLGKGL) and Asp71 each bind ATP. 2 residues coordinate Mg(2+): Asp71 and Glu139. Residues 146 to 148 (DIE), 186 to 191 (KTKPTQ), and Lys222 each bind CTP. UTP-binding positions include 186–191 (KTKPTQ) and Lys222. Positions 291 to 541 (SIAIVGKYTG…VGAAIEQSRL (251 aa)) constitute a Glutamine amidotransferase type-1 domain. Gly353 lines the L-glutamine pocket. Cys380 serves as the catalytic Nucleophile; for glutamine hydrolysis. L-glutamine-binding positions include 381 to 384 (FGMQ), Glu404, and Arg469. Catalysis depends on residues His514 and Glu516.

It belongs to the CTP synthase family. In terms of assembly, homotetramer.

The enzyme catalyses UTP + L-glutamine + ATP + H2O = CTP + L-glutamate + ADP + phosphate + 2 H(+). It carries out the reaction L-glutamine + H2O = L-glutamate + NH4(+). It catalyses the reaction UTP + NH4(+) + ATP = CTP + ADP + phosphate + 2 H(+). It participates in pyrimidine metabolism; CTP biosynthesis via de novo pathway; CTP from UDP: step 2/2. Allosterically activated by GTP, when glutamine is the substrate; GTP has no effect on the reaction when ammonia is the substrate. The allosteric effector GTP functions by stabilizing the protein conformation that binds the tetrahedral intermediate(s) formed during glutamine hydrolysis. Inhibited by the product CTP, via allosteric rather than competitive inhibition. In terms of biological role, catalyzes the ATP-dependent amination of UTP to CTP with either L-glutamine or ammonia as the source of nitrogen. Regulates intracellular CTP levels through interactions with the four ribonucleotide triphosphates. In Methylobacterium radiotolerans (strain ATCC 27329 / DSM 1819 / JCM 2831 / NBRC 15690 / NCIMB 10815 / 0-1), this protein is CTP synthase.